Consider the following 131-residue polypeptide: SPbeta prophage-derived uncharacterized protein YosD (131 aa).

A disordered region spans residues 102-131 (EHNNKKAKNNDTQNQRQIKTSWWQRLTKKD). Positions 111 to 125 (NDTQNQRQIKTSWWQ) are enriched in polar residues.

This Bacillus subtilis (strain 168) protein is SPbeta prophage-derived uncharacterized protein YosD (yosD).